A 937-amino-acid chain; its full sequence is Inactive tyrosine-protein kinase transmembrane receptor ROR1 (937 aa).

The signal sequence occupies residues 1 to 29 (MHRPRRRGTRPPPLALLAALLLAARGADA). Residues 30–406 (QETELSVSAE…KEKNKMEILY (377 aa)) lie on the Extracellular side of the membrane. The 100-residue stretch at 42 to 141 (PTSSWNTSSE…VATNGKKVVS (100 aa)) folds into the Ig-like C2-type domain. Residues N47 and N66 are each glycosylated (N-linked (GlcNAc...) asparagine). 9 cysteine pairs are disulfide-bonded: C79–C131, C170–C235, C178–C228, C219–C260, C248–C296, C252–C282, C313–C391, C334–C374, and C362–C386. In terms of domain architecture, FZ spans 165-299 (EEDGFCQPYR…SPEAANCIRI (135 aa)). Residue N184 is glycosylated (N-linked (GlcNAc...) asparagine). The Kringle domain occupies 312 to 391 (KCYNSTGVDY…KSDLCDIPAC (80 aa)). N315 carries N-linked (GlcNAc...) asparagine glycosylation. A helical membrane pass occupies residues 407–427 (ILVPSVAIPLAIAFLFFFICV). The Cytoplasmic portion of the chain corresponds to 428–937 (CRNNQKSSSP…HTESMISAEV (510 aa)). Residues 473-746 (VRFMEELGEC…PRFKDIHVRL (274 aa)) form the Protein kinase domain. ATP-binding positions include 479-487 (LGECTFGKI) and K506. Y645 bears the Phosphotyrosine; by autocatalysis mark. The segment covering 753–762 (SSHTSSTTPS) has biased composition (low complexity). Disordered regions lie at residues 753-778 (SSHTSSTTPSGGNATTQTTSLSASPV), 840-890 (GPPR…HMSI), and 916-937 (QSSLLGDSHIHGHTESMISAEV). Polar residues predominate over residues 763–778 (GGNATTQTTSLSASPV). Residues 854 to 864 (RSPSSASGSTS) show a composition bias toward low complexity. Residues 865–880 (TGHVASLPSSGSNQEA) show a composition bias toward polar residues.

The protein belongs to the protein kinase superfamily. Tyr protein kinase family. ROR subfamily. As to quaternary structure, interacts with ERBB2 and IGFBP5. At postnatal P0, expressed in heart, lung, liver, kidney, spleen and inner ear.

The protein localises to the membrane. It is found in the cell projection. The protein resides in the axon. Has very low kinase activity in vitro and is unlikely to function as a tyrosine kinase in vivo. Receptor for ligand WNT5A which activate downstream NFkB signaling pathway and may result in the inhibition of WNT3A-mediated signaling. In inner ear, crucial for spiral ganglion neurons to innervate auditory hair cells. Via IGFBP5 ligand, forms a complex with ERBB2 to enhance CREB oncogenic signaling. This is Inactive tyrosine-protein kinase transmembrane receptor ROR1 (Ror1) from Mus musculus (Mouse).